We begin with the raw amino-acid sequence, 405 residues long: Putative aminotransferase AatC (405 aa).

K238 is modified (N6-(pyridoxal phosphate)lysine).

It belongs to the class-I pyridoxal-phosphate-dependent aminotransferase family. Homodimer. Pyridoxal 5'-phosphate serves as cofactor.

Its subcellular location is the cytoplasm. The sequence is that of Putative aminotransferase AatC (aatC) from Rhizobium meliloti (strain 1021) (Ensifer meliloti).